The sequence spans 224 residues: Large ribosomal subunit protein uL1 (224 aa).

Belongs to the universal ribosomal protein uL1 family. In terms of assembly, part of the 50S ribosomal subunit.

Its function is as follows. Binds directly to 23S rRNA. The L1 stalk is quite mobile in the ribosome, and is involved in E site tRNA release. In terms of biological role, protein L1 is also a translational repressor protein, it controls the translation of the L11 operon by binding to its mRNA. This is Large ribosomal subunit protein uL1 from Borrelia recurrentis (strain A1).